We begin with the raw amino-acid sequence, 357 residues long: Phenylalanine--tRNA ligase alpha subunit (357 aa).

E257 contributes to the Mg(2+) binding site.

The protein belongs to the class-II aminoacyl-tRNA synthetase family. Phe-tRNA synthetase alpha subunit type 1 subfamily. As to quaternary structure, tetramer of two alpha and two beta subunits. Mg(2+) serves as cofactor.

It is found in the cytoplasm. It catalyses the reaction tRNA(Phe) + L-phenylalanine + ATP = L-phenylalanyl-tRNA(Phe) + AMP + diphosphate + H(+). The protein is Phenylalanine--tRNA ligase alpha subunit of Ruegeria sp. (strain TM1040) (Silicibacter sp.).